Reading from the N-terminus, the 306-residue chain is CRISPR-associated endonuclease Cas1 (306 aa).

Mn(2+) is bound by residues glutamate 143, histidine 210, and aspartate 223.

The protein belongs to the CRISPR-associated endonuclease Cas1 family. Homodimer, forms a heterotetramer with a Cas2 homodimer. Requires Mg(2+) as cofactor. Mn(2+) serves as cofactor.

In terms of biological role, CRISPR (clustered regularly interspaced short palindromic repeat), is an adaptive immune system that provides protection against mobile genetic elements (viruses, transposable elements and conjugative plasmids). CRISPR clusters contain spacers, sequences complementary to antecedent mobile elements, and target invading nucleic acids. CRISPR clusters are transcribed and processed into CRISPR RNA (crRNA). Acts as a dsDNA endonuclease. Involved in the integration of spacer DNA into the CRISPR cassette. In Geobacter sulfurreducens (strain ATCC 51573 / DSM 12127 / PCA), this protein is CRISPR-associated endonuclease Cas1.